A 572-amino-acid chain; its full sequence is Proline--tRNA ligase (572 aa).

This sequence belongs to the class-II aminoacyl-tRNA synthetase family. ProS type 1 subfamily. Homodimer.

It is found in the cytoplasm. The catalysed reaction is tRNA(Pro) + L-proline + ATP = L-prolyl-tRNA(Pro) + AMP + diphosphate. Its function is as follows. Catalyzes the attachment of proline to tRNA(Pro) in a two-step reaction: proline is first activated by ATP to form Pro-AMP and then transferred to the acceptor end of tRNA(Pro). As ProRS can inadvertently accommodate and process non-cognate amino acids such as alanine and cysteine, to avoid such errors it has two additional distinct editing activities against alanine. One activity is designated as 'pretransfer' editing and involves the tRNA(Pro)-independent hydrolysis of activated Ala-AMP. The other activity is designated 'posttransfer' editing and involves deacylation of mischarged Ala-tRNA(Pro). The misacylated Cys-tRNA(Pro) is not edited by ProRS. In Salmonella dublin (strain CT_02021853), this protein is Proline--tRNA ligase.